Here is a 917-residue protein sequence, read N- to C-terminus: Translation initiation factor IF-2 (917 aa).

A disordered region spans residues 241–312 (EEAKKGTLHK…GGWRSGGGRK (72 aa)). Positions 252 to 262 (AKAEGAEDKKK) are enriched in basic and acidic residues. The span at 274–283 (SSETSSTWQE) shows a compositional bias: polar residues. Residues 298 to 308 (TSGGVGGWRSG) are compositionally biased toward gly residues. The 168-residue stretch at 415–582 (PRPPVVTVMG…NVLLQAEILE (168 aa)) folds into the tr-type G domain. The G1 stretch occupies residues 424-431 (GHVDHGKT). Residue 424–431 (GHVDHGKT) participates in GTP binding. Residues 449-453 (GITQH) form a G2 region. Positions 470 to 473 (DTPG) are G3. Residues 470–474 (DTPGH) and 524–527 (NKID) contribute to the GTP site. Residues 524–527 (NKID) form a G4 region. Residues 560-562 (SAK) are G5.

It belongs to the TRAFAC class translation factor GTPase superfamily. Classic translation factor GTPase family. IF-2 subfamily.

It is found in the cytoplasm. In terms of biological role, one of the essential components for the initiation of protein synthesis. Protects formylmethionyl-tRNA from spontaneous hydrolysis and promotes its binding to the 30S ribosomal subunits. Also involved in the hydrolysis of GTP during the formation of the 70S ribosomal complex. This chain is Translation initiation factor IF-2, found in Polynucleobacter necessarius subsp. necessarius (strain STIR1).